A 306-amino-acid chain; its full sequence is Histone-lysine N-methyltransferase SETMAR (306 aa).

Positions 60–123 (PGCACLKTPC…RCRNRVVQWG (64 aa)) constitute a Pre-SET domain. Residues C62, C64, C69, C74, C76, C105, C109, C111, and C115 each coordinate Zn(2+). One can recognise an SET domain in the interval 126 to 250 (FHLQVFKTDH…PEEELSYDYS (125 aa)). S-adenosyl-L-methionine-binding positions include 136–138 (KGW), Y179, R207, and 210–211 (NH). Residues C213, C274, C276, and C281 each coordinate Zn(2+). One can recognise a Post-SET domain in the interval 270-286 (LRKPCYCGARSCAAFLP).

The protein belongs to the class V-like SAM-binding methyltransferase superfamily.

It is found in the nucleus. The protein localises to the chromosome. It catalyses the reaction L-lysyl(36)-[histone H3] + 2 S-adenosyl-L-methionine = N(6),N(6)-dimethyl-L-lysyl(36)-[histone H3] + 2 S-adenosyl-L-homocysteine + 2 H(+). Functionally, histone methyltransferase that methylates 'Lys-4' and 'Lys-36' of histone H3, 2 specific tags for epigenetic transcriptional activation. Specifically mediates dimethylation of H3 'Lys-36'. This Bos taurus (Bovine) protein is Histone-lysine N-methyltransferase SETMAR.